We begin with the raw amino-acid sequence, 276 residues long: Lyso-ornithine lipid O-acyltransferase (276 aa).

A helical membrane pass occupies residues 25-47; the sequence is LALRGGAMALVLMAGLTLHLAVR.

Belongs to the 1-acyl-sn-glycerol-3-phosphate acyltransferase family. OlsA subfamily.

The protein resides in the membrane. The catalysed reaction is a lyso-ornithine lipid + a fatty acyl-[ACP] = an N(2)-[(3R)-3-(acyloxy)acyl]-L-ornithine lipid + holo-[ACP]. It carries out the reaction a fatty acyl-[ACP] + a 1-acyl-sn-glycero-3-phosphate = a 1,2-diacyl-sn-glycero-3-phosphate + holo-[ACP]. It participates in lipid metabolism. Its pathway is phospholipid metabolism. Its function is as follows. Catalyzes the second step in the formation of ornithine lipids, which are phosphorus-free membrane lipids. Uses acyl-acyl carrier protein (acyl-AcpP) as an acyl donor and converts lyso-ornithine lipid (LOL) into ornithine lipid (OL). It can also act as an alternate acyl-sn-glycerol-3-phosphate acyltransferase (AGPAT) to ensure glycerophospholipid production. This Rhodobacter capsulatus (strain ATCC BAA-309 / NBRC 16581 / SB1003) protein is Lyso-ornithine lipid O-acyltransferase.